A 447-amino-acid chain; its full sequence is tRNA threonylcarbamoyladenosine dehydratase 2 (447 aa).

Transmembrane regions (helical) follow at residues 9–29 (LITA…YAWT), 86–106 (NQYV…NSLV), and 294–314 (ILPV…TWIL).

Belongs to the HesA/MoeB/ThiF family.

It localises to the mitochondrion outer membrane. Functionally, catalyzes the ATP-dependent dehydration of threonylcarbamoyladenosine at position 37 (t(6)A37) to form cyclic t(6)A37 (ct(6)A37) in tRNAs that read codons beginning with adenine. This Saccharomyces cerevisiae (strain ATCC 204508 / S288c) (Baker's yeast) protein is tRNA threonylcarbamoyladenosine dehydratase 2 (TCD2).